Here is a 216-residue protein sequence, read N- to C-terminus: Thioredoxin-like 2, chloroplastic (216 aa).

The transit peptide at 1–58 directs the protein to the chloroplast; sequence MAEALLPLPRRLVVTASTPACSSASSSTSPSPHCLLSRANPRPPRLAAPSPPRHRRLK. Residues 19-40 are compositionally biased toward low complexity; that stretch reads PACSSASSSTSPSPHCLLSRAN. The tract at residues 19 to 70 is disordered; sequence PACSSASSSTSPSPHCLLSRANPRPPRLAAPSPPRHRRLKAHAAVSDKSEQP. The span at 41–51 shows a compositional bias: pro residues; the sequence is PRPPRLAAPSP. The Thioredoxin domain occupies 61–188; sequence AAVSDKSEQP…LKDAIAVHNT (128 aa). Residues Cys111 and Cys114 each act as nucleophile in the active site. A disulfide bond links Cys111 and Cys114.

Belongs to the thioredoxin family.

The protein resides in the plastid. It is found in the chloroplast. In terms of biological role, probable thiol-disulfide oxidoreductase that may participate in various redox reactions. This is Thioredoxin-like 2, chloroplastic from Oryza sativa subsp. japonica (Rice).